Reading from the N-terminus, the 287-residue chain is Hydroxysteroid 11-beta-dehydrogenase 1-like protein (287 aa).

The N-terminal stretch at 1-20 is a signal peptide; it reads MMKPFGKVLCAAGSLAVLLA. Residues 41–67, 92–93, and 119–121 contribute to the NADP(+) site; these read GASA…TARR, DM, and NHI. Ser170 lines the substrate pocket. The active-site Proton acceptor is the Tyr183. Residues 183-187 and 216-222 each bind NADP(+); these read YSATK and GLIDTDA.

The protein belongs to the short-chain dehydrogenases/reductases (SDR) family.

Its subcellular location is the secreted. The catalysed reaction is cortisone + NADPH + H(+) = cortisol + NADP(+). Its function is as follows. Unidirectional NADP(+)-dependent cortisol dehydrogenase (in vitro). The chain is Hydroxysteroid 11-beta-dehydrogenase 1-like protein (HSD11B1L) from Gallus gallus (Chicken).